The following is a 578-amino-acid chain: Zinc finger-containing ubiquitin peptidase 1 (578 aa).

A C2H2-type 1 zinc finger spans residues L2–H24. A C2H2-type 2; atypical zinc finger spans residues I29–H52. 2 consecutive C2H2-type zinc fingers follow at residues P154–H177 and Y193–H215. The tract at residues D226–R248 is MIU. The tract at residues R249 to G274 is zUBD/ZHA. At K262 the chain carries N6-acetyllysine. C360 acts as the Nucleophile in catalysis. H491 functions as the Proton acceptor in the catalytic mechanism. Residue D512 is part of the active site.

Belongs to the peptidase C78 family. ZUFSP subfamily. In terms of assembly, interacts with RPA1 and RPA2.

Its subcellular location is the cytoplasm. The protein resides in the nucleus. It carries out the reaction Thiol-dependent hydrolysis of ester, thioester, amide, peptide and isopeptide bonds formed by the C-terminal Gly of ubiquitin (a 76-residue protein attached to proteins as an intracellular targeting signal).. In terms of biological role, deubiquitinase with endodeubiquitinase activity that specifically interacts with and cleaves 'Lys-63'-linked long polyubiquitin chains. Shows only weak activity against 'Lys-11' and 'Lys-48'-linked chains. Plays an important role in genome stability pathways, functioning to prevent spontaneous DNA damage and also promote cellular survival in response to exogenous DNA damage. Modulates the ubiquitination status of replication protein A (RPA) complex proteins in response to replication stress. The protein is Zinc finger-containing ubiquitin peptidase 1 of Macaca fascicularis (Crab-eating macaque).